The chain runs to 315 residues: Acetaldehyde dehydrogenase 1 (315 aa).

NAD(+) is bound at residue 12 to 15; the sequence is SGNI. The active-site Acyl-thioester intermediate is cysteine 132. NAD(+) contacts are provided by residues 163–171 and asparagine 291; that span reads SAGPGTRAN.

This sequence belongs to the acetaldehyde dehydrogenase family.

It catalyses the reaction acetaldehyde + NAD(+) + CoA = acetyl-CoA + NADH + H(+). The sequence is that of Acetaldehyde dehydrogenase 1 from Paraburkholderia phymatum (strain DSM 17167 / CIP 108236 / LMG 21445 / STM815) (Burkholderia phymatum).